Consider the following 871-residue polypeptide: Chaperone protein ClpB 1 (871 aa).

The 142-residue stretch at P6–S147 folds into the Clp R domain. Repeat stretches follow at residues F9 to Q73 and L84 to S147. The NBD1 stretch occupies residues A160–Q341. G207–T214 is a binding site for ATP. Residues P342–G550 form a linker region. Positions I392 to V526 form a coiled coil. An NBD2 region spans residues E560–S771. Residue G610–T617 coordinates ATP. Residues L772–V871 are C-terminal.

The protein belongs to the ClpA/ClpB family. Homohexamer. The oligomerization is ATP-dependent.

Its subcellular location is the cytoplasm. Its function is as follows. Part of a stress-induced multi-chaperone system, it is involved in the recovery of the cell from heat-induced damage, in cooperation with DnaK, DnaJ and GrpE. Acts before DnaK, in the processing of protein aggregates. Protein binding stimulates the ATPase activity; ATP hydrolysis unfolds the denatured protein aggregates, which probably helps expose new hydrophobic binding sites on the surface of ClpB-bound aggregates, contributing to the solubilization and refolding of denatured protein aggregates by DnaK. The polypeptide is Chaperone protein ClpB 1 (clpB1) (Thermosynechococcus vestitus (strain NIES-2133 / IAM M-273 / BP-1)).